The chain runs to 536 residues: Adenine deaminase (536 aa).

The interval 1–24 is disordered; it reads MTPSPHDLLHCGMNSQDRDETNGD.

This sequence belongs to the metallo-dependent hydrolases superfamily. Adenine deaminase family. Requires Mn(2+) as cofactor.

The catalysed reaction is adenine + H2O + H(+) = hypoxanthine + NH4(+). In Deinococcus radiodurans (strain ATCC 13939 / DSM 20539 / JCM 16871 / CCUG 27074 / LMG 4051 / NBRC 15346 / NCIMB 9279 / VKM B-1422 / R1), this protein is Adenine deaminase.